The sequence spans 288 residues: Glutamate racemase (288 aa).

The disordered stretch occupies residues 1–21; sequence MAIARQDVNISSPEATTSDAQ. The segment covering 8–21 has biased composition (polar residues); sequence VNISSPEATTSDAQ. Residues 32–33 and 64–65 contribute to the substrate site; these read DS and YG. Catalysis depends on cysteine 96, which acts as the Proton donor/acceptor. Substrate is bound at residue 97 to 98; that stretch reads NT. The active-site Proton donor/acceptor is cysteine 209. 210-211 is a substrate binding site; sequence TH.

The protein belongs to the aspartate/glutamate racemases family.

It carries out the reaction L-glutamate = D-glutamate. It participates in cell wall biogenesis; peptidoglycan biosynthesis. Provides the (R)-glutamate required for cell wall biosynthesis. This is Glutamate racemase from Proteus mirabilis (strain HI4320).